A 176-amino-acid chain; its full sequence is MSEIAQDSNVSIFSKNEKKARELILKLGLKPIQGVSRVTFKKKDGQIFAIDRPEVYKSQGGNFVVFGEAKVDDFTQRLAKAQESLQQNEGVLPAGQDAVSKDPQSIQADMQAAADSATDKPSADDAVDDAEVDETGLNADDIELVMQQAGVPRAKAAKALKEHDSDIVNAIMALSG.

Residues 14 to 78 form the NAC-A/B domain; that stretch reads SKNEKKAREL…AKVDDFTQRL (65 aa). The disordered stretch occupies residues 85–127; that stretch reads LQQNEGVLPAGQDAVSKDPQSIQADMQAAADSATDKPSADDAV. The UBA domain maps to 137–176; the sequence is LNADDIELVMQQAGVPRAKAAKALKEHDSDIVNAIMALSG.

The protein belongs to the NAC-alpha family. As to quaternary structure, part of the nascent polypeptide-associated complex (NAC), consisting of EGD2 and EGD1. NAC associates with ribosomes via EGD1.

It is found in the cytoplasm. The protein localises to the nucleus. Its function is as follows. Component of the nascent polypeptide-associated complex (NAC), a dynamic component of the ribosomal exit tunnel, protecting the emerging polypeptides from interaction with other cytoplasmic proteins to ensure appropriate nascent protein targeting. The NAC complex also promotes mitochondrial protein import by enhancing productive ribosome interactions with the outer mitochondrial membrane and blocks the inappropriate interaction of ribosomes translating non-secretory nascent polypeptides with translocation sites in the membrane of the endoplasmic reticulum. EGD2 may also be involved in transcription regulation. This chain is Nascent polypeptide-associated complex subunit alpha (EGD2), found in Kluyveromyces lactis (strain ATCC 8585 / CBS 2359 / DSM 70799 / NBRC 1267 / NRRL Y-1140 / WM37) (Yeast).